The sequence spans 440 residues: Xaa-Pro dipeptidase (440 aa).

Asp244, Asp255, His335, Glu380, and Glu419 together coordinate Mn(2+).

This sequence belongs to the peptidase M24B family. Bacterial-type prolidase subfamily. The cofactor is Mn(2+).

The enzyme catalyses Xaa-L-Pro dipeptide + H2O = an L-alpha-amino acid + L-proline. Its function is as follows. Splits dipeptides with a prolyl residue in the C-terminal position. This Shewanella baltica (strain OS223) protein is Xaa-Pro dipeptidase.